A 725-amino-acid polypeptide reads, in one-letter code: Glyoxysomal fatty acid beta-oxidation multifunctional protein MFP-a (725 aa).

Residue Glu-119 is the Nucleophile of the active site. Catalysis depends on Glu-139, which acts as the Proton acceptor. The short motif at 723 to 725 is the Microbody targeting signal element; that stretch reads SRL.

The protein in the N-terminal section; belongs to the enoyl-CoA hydratase/isomerase family. In the central section; belongs to the 3-hydroxyacyl-CoA dehydrogenase family.

The protein localises to the glyoxysome. The enzyme catalyses a (3S)-3-hydroxyacyl-CoA = a (2E)-enoyl-CoA + H2O. It carries out the reaction a 4-saturated-(3S)-3-hydroxyacyl-CoA = a (3E)-enoyl-CoA + H2O. It catalyses the reaction a (3Z)-enoyl-CoA = a 4-saturated (2E)-enoyl-CoA. The catalysed reaction is a (3E)-enoyl-CoA = a 4-saturated (2E)-enoyl-CoA. The enzyme catalyses (3S)-3-hydroxybutanoyl-CoA = (3R)-3-hydroxybutanoyl-CoA. It carries out the reaction a (3S)-3-hydroxyacyl-CoA + NAD(+) = a 3-oxoacyl-CoA + NADH + H(+). Its pathway is lipid metabolism; fatty acid beta-oxidation. This chain is Glyoxysomal fatty acid beta-oxidation multifunctional protein MFP-a, found in Brassica napus (Rape).